The chain runs to 957 residues: Glycine dehydrogenase (decarboxylating) (957 aa).

Lysine 708 carries the N6-(pyridoxal phosphate)lysine modification.

The protein belongs to the GcvP family. As to quaternary structure, the glycine cleavage system is composed of four proteins: P, T, L and H. It depends on pyridoxal 5'-phosphate as a cofactor.

The catalysed reaction is N(6)-[(R)-lipoyl]-L-lysyl-[glycine-cleavage complex H protein] + glycine + H(+) = N(6)-[(R)-S(8)-aminomethyldihydrolipoyl]-L-lysyl-[glycine-cleavage complex H protein] + CO2. Its function is as follows. The glycine cleavage system catalyzes the degradation of glycine. The P protein binds the alpha-amino group of glycine through its pyridoxal phosphate cofactor; CO(2) is released and the remaining methylamine moiety is then transferred to the lipoamide cofactor of the H protein. This Escherichia coli (strain UTI89 / UPEC) protein is Glycine dehydrogenase (decarboxylating).